A 198-amino-acid chain; its full sequence is Elongation factor Ts (198 aa).

Positions 81–84 are involved in Mg(2+) ion dislocation from EF-Tu; the sequence is TDFV.

This sequence belongs to the EF-Ts family.

It is found in the cytoplasm. Associates with the EF-Tu.GDP complex and induces the exchange of GDP to GTP. It remains bound to the aminoacyl-tRNA.EF-Tu.GTP complex up to the GTP hydrolysis stage on the ribosome. This Dictyoglomus turgidum (strain DSM 6724 / Z-1310) protein is Elongation factor Ts.